The following is a 258-amino-acid chain: Tryptophan synthase alpha chain (258 aa).

Catalysis depends on proton acceptor residues Glu-46 and Asp-57.

It belongs to the TrpA family. In terms of assembly, tetramer of two alpha and two beta chains.

It catalyses the reaction (1S,2R)-1-C-(indol-3-yl)glycerol 3-phosphate + L-serine = D-glyceraldehyde 3-phosphate + L-tryptophan + H2O. It participates in amino-acid biosynthesis; L-tryptophan biosynthesis; L-tryptophan from chorismate: step 5/5. In terms of biological role, the alpha subunit is responsible for the aldol cleavage of indoleglycerol phosphate to indole and glyceraldehyde 3-phosphate. The protein is Tryptophan synthase alpha chain of Phocaeicola vulgatus (strain ATCC 8482 / DSM 1447 / JCM 5826 / CCUG 4940 / NBRC 14291 / NCTC 11154) (Bacteroides vulgatus).